Here is a 231-residue protein sequence, read N- to C-terminus: Flagellar L-ring protein (231 aa).

Residues 1-18 (MNRLMIVSLLGIATVLGG) form the signal peptide. Cysteine 19 carries the N-palmitoyl cysteine lipid modification. Cysteine 19 carries the S-diacylglycerol cysteine lipid modification. Residues 118-141 (LSLSAEYGGSRDAKGDSQAGQSNS) form a disordered region.

It belongs to the FlgH family. In terms of assembly, the basal body constitutes a major portion of the flagellar organelle and consists of four rings (L,P,S, and M) mounted on a central rod.

It is found in the cell outer membrane. The protein resides in the bacterial flagellum basal body. In terms of biological role, assembles around the rod to form the L-ring and probably protects the motor/basal body from shearing forces during rotation. In Pseudomonas paraeruginosa (strain DSM 24068 / PA7) (Pseudomonas aeruginosa (strain PA7)), this protein is Flagellar L-ring protein.